Reading from the N-terminus, the 101-residue chain is Small ribosomal subunit protein uS10 (101 aa).

Belongs to the universal ribosomal protein uS10 family. In terms of assembly, part of the 30S ribosomal subunit.

Functionally, involved in the binding of tRNA to the ribosomes. This chain is Small ribosomal subunit protein uS10, found in Mycobacteroides abscessus (strain ATCC 19977 / DSM 44196 / CCUG 20993 / CIP 104536 / JCM 13569 / NCTC 13031 / TMC 1543 / L948) (Mycobacterium abscessus).